The primary structure comprises 336 residues: Alpha-glucoside transport system permease protein AglF (336 aa).

8 helical membrane passes run 4 to 24 (LIAAILTMVAGVLVCAAYFWS), 55 to 75 (PWLFLAPALLALTLYLVYPVV), 113 to 133 (FLWLLVVPALSTFFGLIIAAL), 146 to 166 (LIFMPMAISFVGAAVIWKFIY), 176 to 196 (IGLLNAIVVALGGEPQAWITL), 202 to 222 (FFLMVILIWIQTGFAMVILSA), 258 to 278 (IAVVWTTITILVLKVFDIVLA), and 304 to 324 (FGRGAAIAVVIMILVVPIMIW). Positions 109–325 (IFNNFLWLLV…ILVVPIMIWN (217 aa)) constitute an ABC transmembrane type-1 domain.

This sequence belongs to the binding-protein-dependent transport system permease family. MalFG subfamily.

The protein localises to the cell inner membrane. Part of the binding-protein-dependent transport system for alpha-glucosides such as sucrose, maltose and trehalose. Probably responsible for the translocation of the substrate across the membrane. The sequence is that of Alpha-glucoside transport system permease protein AglF (aglF) from Rhizobium meliloti (strain 1021) (Ensifer meliloti).